A 270-amino-acid polypeptide reads, in one-letter code: Glutamate racemase (270 aa).

Substrate is bound by residues 10–11 and 42–43; these read DS and YG. The active-site Proton donor/acceptor is the cysteine 73. Residue 74–75 coordinates substrate; it reads NT. Cysteine 184 functions as the Proton donor/acceptor in the catalytic mechanism. 185 to 186 is a binding site for substrate; it reads TH.

It belongs to the aspartate/glutamate racemases family.

It catalyses the reaction L-glutamate = D-glutamate. It participates in cell wall biogenesis; peptidoglycan biosynthesis. Its function is as follows. Provides the (R)-glutamate required for cell wall biosynthesis. The chain is Glutamate racemase from Geobacter metallireducens (strain ATCC 53774 / DSM 7210 / GS-15).